Reading from the N-terminus, the 115-residue chain is DNA-directed RNA polymerase II subunit RPB11-b1 (115 aa).

This sequence belongs to the archaeal Rpo11/eukaryotic RPB11/RPC19 RNA polymerase subunit family. Component of the RNA polymerase II (Pol II) complex consisting of 12 subunits. Ubiquitously expressed.

The protein localises to the nucleus. Functionally, DNA-dependent RNA polymerase catalyzes the transcription of DNA into RNA using the four ribonucleoside triphosphates as substrates. Component of RNA polymerase II which synthesizes mRNA precursors and many functional non-coding RNAs. Pol II is the central component of the basal RNA polymerase II transcription machinery. It is composed of mobile elements that move relative to each other. RPB11 is part of the core element with the central large cleft. The protein is DNA-directed RNA polymerase II subunit RPB11-b1 (POLR2J2) of Homo sapiens (Human).